A 375-amino-acid chain; its full sequence is Transaldolase (375 aa).

Lys145 acts as the Schiff-base intermediate with substrate in catalysis.

Belongs to the transaldolase family. Type 2 subfamily.

It localises to the cytoplasm. The enzyme catalyses D-sedoheptulose 7-phosphate + D-glyceraldehyde 3-phosphate = D-erythrose 4-phosphate + beta-D-fructose 6-phosphate. It functions in the pathway carbohydrate degradation; pentose phosphate pathway; D-glyceraldehyde 3-phosphate and beta-D-fructose 6-phosphate from D-ribose 5-phosphate and D-xylulose 5-phosphate (non-oxidative stage): step 2/3. Functionally, transaldolase is important for the balance of metabolites in the pentose-phosphate pathway. This Mycobacterium leprae (strain Br4923) protein is Transaldolase.